Consider the following 436-residue polypeptide: Histidine--tRNA ligase (436 aa).

Belongs to the class-II aminoacyl-tRNA synthetase family. Homodimer.

The protein resides in the cytoplasm. It carries out the reaction tRNA(His) + L-histidine + ATP = L-histidyl-tRNA(His) + AMP + diphosphate + H(+). This Psychrobacter sp. (strain PRwf-1) protein is Histidine--tRNA ligase.